Here is a 120-residue protein sequence, read N- to C-terminus: Ribosome-binding factor A (120 aa).

Belongs to the RbfA family. As to quaternary structure, monomer. Binds 30S ribosomal subunits, but not 50S ribosomal subunits or 70S ribosomes.

It localises to the cytoplasm. Functionally, one of several proteins that assist in the late maturation steps of the functional core of the 30S ribosomal subunit. Associates with free 30S ribosomal subunits (but not with 30S subunits that are part of 70S ribosomes or polysomes). Required for efficient processing of 16S rRNA. May interact with the 5'-terminal helix region of 16S rRNA. The sequence is that of Ribosome-binding factor A from Buchnera aphidicola subsp. Acyrthosiphon pisum (strain 5A).